The chain runs to 455 residues: MIAREGSNSRKVFIKTYGCQMNVYDSVRMSDALAKDGYVQTEDMGEADLVLLNTCHIREKAAEKVYSALGRLRDMKKSREEQGREFMIGVAGCVAQAEGEEILRRAPAVDVVIGPQTYHRLPDALKRVRRGERVIETEYAVEDKFEHLPVAEKATLRSRGVTAFLTVQEGCDKFCTFCVVPYTRGSEVSRPVRQIVDEAMKLVDAGVREITLLGQNVNAWQGEGPKGEKWGLAELLYRLAEIPGLARLRYTTSHPRDMDDRLIGAHRDLRILMPYLHLPVQSGSDRILKAMNRRHTGEEYIQLIEKIRSARPDIAMSGDFIVGFPGETDRDFEDTMAMVETVKYAQAFSFKYSTRPGTPGADLTDQVAEDVKAERLERLQALLLRQQKEFAESLVGKTMDVLLEKPGRMPEQLIGRSPWLQSVNLDAKTLKIGDIVNVRITATGPNSLFAEVAGS.

Residues 10 to 130 (RKVFIKTYGC…LPDALKRVRR (121 aa)) enclose the MTTase N-terminal domain. [4Fe-4S] cluster-binding residues include C19, C55, C93, C171, C175, and C178. Residues 157 to 389 (RSRGVTAFLT…QALLLRQQKE (233 aa)) form the Radical SAM core domain. Residues 392-454 (ESLVGKTMDV…PNSLFAEVAG (63 aa)) form the TRAM domain.

It belongs to the methylthiotransferase family. MiaB subfamily. As to quaternary structure, monomer. Requires [4Fe-4S] cluster as cofactor.

Its subcellular location is the cytoplasm. The catalysed reaction is N(6)-dimethylallyladenosine(37) in tRNA + (sulfur carrier)-SH + AH2 + 2 S-adenosyl-L-methionine = 2-methylsulfanyl-N(6)-dimethylallyladenosine(37) in tRNA + (sulfur carrier)-H + 5'-deoxyadenosine + L-methionine + A + S-adenosyl-L-homocysteine + 2 H(+). Functionally, catalyzes the methylthiolation of N6-(dimethylallyl)adenosine (i(6)A), leading to the formation of 2-methylthio-N6-(dimethylallyl)adenosine (ms(2)i(6)A) at position 37 in tRNAs that read codons beginning with uridine. The chain is tRNA-2-methylthio-N(6)-dimethylallyladenosine synthase from Agrobacterium fabrum (strain C58 / ATCC 33970) (Agrobacterium tumefaciens (strain C58)).